The following is a 629-amino-acid chain: tRNA uridine 5-carboxymethylaminomethyl modification enzyme MnmG (629 aa).

Residues 13–18, valine 125, and serine 180 contribute to the FAD site; that span reads GGGHAG. 273–287 provides a ligand contact to NAD(+); the sequence is GPRYCPSIEDKVMRF. Residue glutamine 370 participates in FAD binding.

Belongs to the MnmG family. In terms of assembly, homodimer. Heterotetramer of two MnmE and two MnmG subunits. FAD is required as a cofactor.

Its subcellular location is the cytoplasm. Functionally, NAD-binding protein involved in the addition of a carboxymethylaminomethyl (cmnm) group at the wobble position (U34) of certain tRNAs, forming tRNA-cmnm(5)s(2)U34. The protein is tRNA uridine 5-carboxymethylaminomethyl modification enzyme MnmG of Citrobacter koseri (strain ATCC BAA-895 / CDC 4225-83 / SGSC4696).